The chain runs to 184 residues: Heme transporter hrg-4 (184 aa).

The chain crosses the membrane as a helical span at residues 19 to 39; the sequence is IGWTIFGIVFGISAILTYAIK. The N-linked (GlcNAc...) asparagine glycan is linked to Asn-42. 3 helical membrane passes run 46–66, 87–107, and 124–146; these read TATTAIATLFACETLYLYWAL, VFIGLLGLLGCLVCYIIAGIT, and IYFSKFAAMYGENLWFTGSWSLV.

The protein belongs to the HRG family.

The protein resides in the cell membrane. Functionally, heme transporter that mediates heme uptake across the plasma membrane. This chain is Heme transporter hrg-4, found in Caenorhabditis elegans.